The sequence spans 275 residues: Nurim (275 aa).

Topologically, residues 1-4 (MASV) are nuclear. Residues 5-32 (TFRDGFLCVSALITFVFVFVTGADFVRF) traverse the membrane as a helical segment. Topologically, residues 33–63 (VSFRAINHNLSGAAPLCRDSVPWSVALRDGV) are perinuclear space. Residues 64–85 (VQKAVAVDVLLLVVFSLQHSLL) form a helical membrane-spanning segment. The Nuclear segment spans residues 86-102 (AWTPVKRVCQSVFGVLS). The chain crosses the membrane as a helical span at residues 103–119 (RSVYCFTTAAALQILMH). The Perinuclear space segment spans residues 120–138 (YWRPVTSAPCLWSVSSAPW). The helical transmembrane segment at 139–169 (EIWFPLICFIVHFLCWAIICSILLIFDYPEL) threads the bilayer. Topologically, residues 170–196 (LGIKQVYYECLGLGDPLLLKSERAQRL) are nuclear. A helical membrane pass occupies residues 197–215 (YSHLRHPVCVELLTVLWLL). The Perinuclear space segment spans residues 216-221 (PSFPLD). The chain crosses the membrane as a helical span at residues 222-239 (RLLLAVFLTVYLILAHSL). Topologically, residues 240 to 275 (DKQDCAYLRHQLRNKLQLFSTPLEGSEQTNDNNKLE) are nuclear.

It belongs to the nurim family.

The protein resides in the nucleus inner membrane. This Danio rerio (Zebrafish) protein is Nurim (nrm).